The sequence spans 186 residues: Protein C (186 aa).

The segment covering 1–15 (MSKTDWNASGLSRPS) has biased composition (polar residues). A disordered region spans residues 1 to 44 (MSKTDWNASGLSRPSPSAHWPSRKLWQHGQKYQTTQDRSEPPAG).

It belongs to the morbillivirus protein C family. In terms of assembly, interacts with the phosphoprotein (via C-terminus); this interaction allows C to associate with the ribonucleocapsid.

It localises to the host nucleus. It is found in the host cytoplasmic vesicle. Ribonucleocapsid-associated protein that interacts with the phosphoprotein (P), thereby increasing replication accuracy and processivity of the polymerase complex. In Homo sapiens (Human), this protein is Protein C (P/V/C).